We begin with the raw amino-acid sequence, 404 residues long: Pyrophosphate--fructose 6-phosphate 1-phosphotransferase (404 aa).

Glycine 12 is a diphosphate binding site. Aspartate 121 is a Mg(2+) binding site. Substrate contacts are provided by residues 149-151 (TID), 194-196 (MGR), glutamate 266, and 323-326 (YFSR). Residue aspartate 151 is the Proton acceptor of the active site.

This sequence belongs to the phosphofructokinase type A (PFKA) family. PPi-dependent PFK group II subfamily. Clade 'P' sub-subfamily. As to quaternary structure, homodimer. Mg(2+) is required as a cofactor.

It is found in the cytoplasm. It carries out the reaction beta-D-fructose 6-phosphate + diphosphate = beta-D-fructose 1,6-bisphosphate + phosphate + H(+). The protein operates within carbohydrate degradation; glycolysis; D-glyceraldehyde 3-phosphate and glycerone phosphate from D-glucose: step 3/4. With respect to regulation, non-allosteric. Functionally, catalyzes the phosphorylation of D-fructose 6-phosphate, the first committing step of glycolysis. Uses inorganic phosphate (PPi) as phosphoryl donor instead of ATP like common ATP-dependent phosphofructokinases (ATP-PFKs), which renders the reaction reversible, and can thus function both in glycolysis and gluconeogenesis. Consistently, PPi-PFK can replace the enzymes of both the forward (ATP-PFK) and reverse (fructose-bisphosphatase (FBPase)) reactions. The protein is Pyrophosphate--fructose 6-phosphate 1-phosphotransferase of Propionibacterium freudenreichii subsp. shermanii (strain ATCC 9614 / DSM 4902 / CIP 103027 / NCIMB 8099 / CIRM-BIA1).